The following is a 428-amino-acid chain: Enolase (428 aa).

Position 163 (Gln-163) interacts with (2R)-2-phosphoglycerate. The active-site Proton donor is Glu-205. Asp-242, Glu-285, and Asp-312 together coordinate Mg(2+). (2R)-2-phosphoglycerate contacts are provided by Lys-337, Arg-366, Ser-367, and Lys-388. The active-site Proton acceptor is Lys-337.

It belongs to the enolase family. Requires Mg(2+) as cofactor.

Its subcellular location is the cytoplasm. The protein resides in the secreted. It is found in the cell surface. It catalyses the reaction (2R)-2-phosphoglycerate = phosphoenolpyruvate + H2O. It functions in the pathway carbohydrate degradation; glycolysis; pyruvate from D-glyceraldehyde 3-phosphate: step 4/5. Its function is as follows. Catalyzes the reversible conversion of 2-phosphoglycerate (2-PG) into phosphoenolpyruvate (PEP). It is essential for the degradation of carbohydrates via glycolysis. This Polynucleobacter asymbioticus (strain DSM 18221 / CIP 109841 / QLW-P1DMWA-1) (Polynucleobacter necessarius subsp. asymbioticus) protein is Enolase.